The chain runs to 337 residues: Holliday junction branch migration complex subunit RuvB (337 aa).

Positions 1–182 (MEDRMVSASY…FGVLSAMEFY (182 aa)) are large ATPase domain (RuvB-L). Residues Leu21, Arg22, Gly63, Lys66, Thr67, Thr68, Arg172, Tyr182, and Arg219 each contribute to the ATP site. Thr67 is a binding site for Mg(2+). The segment at 183-253 (NEDELKEIIL…IAKNALSLLE (71 aa)) is small ATPAse domain (RuvB-S). Positions 256–337 (GEGFDKIDNK…REFKEQTKLT (82 aa)) are head domain (RuvB-H). DNA contacts are provided by Arg311 and Arg316.

The protein belongs to the RuvB family. As to quaternary structure, homohexamer. Forms an RuvA(8)-RuvB(12)-Holliday junction (HJ) complex. HJ DNA is sandwiched between 2 RuvA tetramers; dsDNA enters through RuvA and exits via RuvB. An RuvB hexamer assembles on each DNA strand where it exits the tetramer. Each RuvB hexamer is contacted by two RuvA subunits (via domain III) on 2 adjacent RuvB subunits; this complex drives branch migration. In the full resolvosome a probable DNA-RuvA(4)-RuvB(12)-RuvC(2) complex forms which resolves the HJ.

It localises to the cytoplasm. The catalysed reaction is ATP + H2O = ADP + phosphate + H(+). The RuvA-RuvB-RuvC complex processes Holliday junction (HJ) DNA during genetic recombination and DNA repair, while the RuvA-RuvB complex plays an important role in the rescue of blocked DNA replication forks via replication fork reversal (RFR). RuvA specifically binds to HJ cruciform DNA, conferring on it an open structure. The RuvB hexamer acts as an ATP-dependent pump, pulling dsDNA into and through the RuvAB complex. RuvB forms 2 homohexamers on either side of HJ DNA bound by 1 or 2 RuvA tetramers; 4 subunits per hexamer contact DNA at a time. Coordinated motions by a converter formed by DNA-disengaged RuvB subunits stimulates ATP hydrolysis and nucleotide exchange. Immobilization of the converter enables RuvB to convert the ATP-contained energy into a lever motion, pulling 2 nucleotides of DNA out of the RuvA tetramer per ATP hydrolyzed, thus driving DNA branch migration. The RuvB motors rotate together with the DNA substrate, which together with the progressing nucleotide cycle form the mechanistic basis for DNA recombination by continuous HJ branch migration. Branch migration allows RuvC to scan DNA until it finds its consensus sequence, where it cleaves and resolves cruciform DNA. The polypeptide is Holliday junction branch migration complex subunit RuvB (Clostridium novyi (strain NT)).